We begin with the raw amino-acid sequence, 316 residues long: Aspartate-semialdehyde dehydrogenase (316 aa).

Residues 13-16 and 41-42 each bind NADP(+); these read TGAV and RS. A phosphate-binding site is contributed by arginine 101. Cysteine 132 acts as the Acyl-thioester intermediate in catalysis. Glutamine 159 provides a ligand contact to substrate. Residue 162–163 coordinates NADP(+); that stretch reads SG. Lysine 216 is a phosphate binding site. Arginine 238 is a binding site for substrate. Histidine 245 acts as the Proton acceptor in catalysis. Asparagine 316 is an NADP(+) binding site.

This sequence belongs to the aspartate-semialdehyde dehydrogenase family. As to quaternary structure, homodimer.

The catalysed reaction is L-aspartate 4-semialdehyde + phosphate + NADP(+) = 4-phospho-L-aspartate + NADPH + H(+). The protein operates within amino-acid biosynthesis; L-lysine biosynthesis via DAP pathway; (S)-tetrahydrodipicolinate from L-aspartate: step 2/4. Its pathway is amino-acid biosynthesis; L-methionine biosynthesis via de novo pathway; L-homoserine from L-aspartate: step 2/3. It functions in the pathway amino-acid biosynthesis; L-threonine biosynthesis; L-threonine from L-aspartate: step 2/5. In terms of biological role, catalyzes the NADPH-dependent formation of L-aspartate-semialdehyde (L-ASA) by the reductive dephosphorylation of L-aspartyl-4-phosphate. This is Aspartate-semialdehyde dehydrogenase (asd) from Vibrio mimicus.